Here is a 296-residue protein sequence, read N- to C-terminus: Glycine--tRNA ligase alpha subunit (296 aa).

Belongs to the class-II aminoacyl-tRNA synthetase family. In terms of assembly, tetramer of two alpha and two beta subunits.

The protein resides in the cytoplasm. The catalysed reaction is tRNA(Gly) + glycine + ATP = glycyl-tRNA(Gly) + AMP + diphosphate. In Synechococcus sp. (strain CC9605), this protein is Glycine--tRNA ligase alpha subunit.